A 216-amino-acid polypeptide reads, in one-letter code: Orotate phosphoribosyltransferase (216 aa).

Lysine 30 provides a ligand contact to 5-phospho-alpha-D-ribose 1-diphosphate. Position 38 to 39 (38 to 39 (FF)) interacts with orotate. 5-phospho-alpha-D-ribose 1-diphosphate-binding positions include 75 to 76 (YK), arginine 102, lysine 103, lysine 106, histidine 108, and 128 to 136 (DDVITAGTA). Orotate is bound by residues threonine 132 and arginine 160.

This sequence belongs to the purine/pyrimidine phosphoribosyltransferase family. PyrE subfamily. As to quaternary structure, homodimer. Mg(2+) is required as a cofactor.

The enzyme catalyses orotidine 5'-phosphate + diphosphate = orotate + 5-phospho-alpha-D-ribose 1-diphosphate. It functions in the pathway pyrimidine metabolism; UMP biosynthesis via de novo pathway; UMP from orotate: step 1/2. Catalyzes the transfer of a ribosyl phosphate group from 5-phosphoribose 1-diphosphate to orotate, leading to the formation of orotidine monophosphate (OMP). The polypeptide is Orotate phosphoribosyltransferase (Acinetobacter baumannii (strain ACICU)).